The primary structure comprises 360 residues: Peptide chain release factor 1 (360 aa).

Gln235 bears the N5-methylglutamine mark. Positions 286–311 (QAQAQADTRRNLLGSGDRSDKIRTYN) are disordered.

Belongs to the prokaryotic/mitochondrial release factor family. Post-translationally, methylated by PrmC. Methylation increases the termination efficiency of RF1.

The protein resides in the cytoplasm. In terms of biological role, peptide chain release factor 1 directs the termination of translation in response to the peptide chain termination codons UAG and UAA. The polypeptide is Peptide chain release factor 1 (Histophilus somni (strain 2336) (Haemophilus somnus)).